A 378-amino-acid chain; its full sequence is Chaperone protein DnaJ (378 aa).

Residues 5-72 (DFYEVLGVPK…QKRAAYDQFG (68 aa)) enclose the J domain. The segment at 138 to 216 (GKEAQIRIPS…CHGQGKVKKQ (79 aa)) adopts a CR-type zinc-finger fold. 8 residues coordinate Zn(2+): C151, C154, C168, C171, C190, C193, C204, and C207. CXXCXGXG motif repeat units lie at residues 151-158 (CETCHGSG), 168-175 (CTTCSGTG), 190-197 (CPHCRGTG), and 204-211 (CVTCHGQG). Residues 354-378 (SLKKGGGKHSPSGESWTDRLKNLFT) are disordered. Residues 369–378 (WTDRLKNLFT) show a composition bias toward basic and acidic residues.

This sequence belongs to the DnaJ family. In terms of assembly, homodimer. The cofactor is Zn(2+).

The protein localises to the cytoplasm. In terms of biological role, participates actively in the response to hyperosmotic and heat shock by preventing the aggregation of stress-denatured proteins and by disaggregating proteins, also in an autonomous, DnaK-independent fashion. Unfolded proteins bind initially to DnaJ; upon interaction with the DnaJ-bound protein, DnaK hydrolyzes its bound ATP, resulting in the formation of a stable complex. GrpE releases ADP from DnaK; ATP binding to DnaK triggers the release of the substrate protein, thus completing the reaction cycle. Several rounds of ATP-dependent interactions between DnaJ, DnaK and GrpE are required for fully efficient folding. Also involved, together with DnaK and GrpE, in the DNA replication of plasmids through activation of initiation proteins. This Paracidovorax citrulli (strain AAC00-1) (Acidovorax citrulli) protein is Chaperone protein DnaJ.